A 217-amino-acid chain; its full sequence is Frataxin, mitochondrial (217 aa).

Residues 1–42 (MWTLGRRSVASFLPRSALPGFAPTRAGAPRPAKDLSLSGLPG) constitute a mitochondrion transit peptide.

It belongs to the frataxin family. In terms of assembly, component of the mitochondrial core iron-sulfur cluster (ISC) complex composed of NFS1, LYRM4, NDUFAB1, ISCU, FXN, and FDX2; this complex is a heterohexamer containing two copies of each monomer. Homodimer. Monomer (probable predominant form). Oligomer. Monomers and polymeric aggregates of &gt;1 MDa have been isolated from mitochondria. A small fraction of heterologous overexpressed recombinant frataxin forms high-molecular weight aggregates that incorporate iron. Interacts with LYRM4. Interacts (via ferrous form) with ISCU; the interaction is possible when both are bound to the dimeric form of the cysteine desulfurase complex (NFS1:LYRM4) and the interaction enhances FXN interaction to the dimeric form of the cysteine desulfurase complex (NFS1:LYRM4). Interacts with FECH; one iron-bound FXN monomer seems to interact with a FECH homodimer. Interacts with SDHA and SDHB. Interacts with ACO2; the interaction is dependent on citrate. Interacts with HSPA9. Interacts with ACO1. Interacts with ISCU (cytoplasmic form). In terms of processing, processed in two steps by mitochondrial processing peptidase (MPP). MPP first cleaves the precursor to intermediate form and subsequently converts the intermediate to yield frataxin mature form (frataxin(81-210)) which is the predominant form. The additional forms, frataxin(56-210) and frataxin(78-210), seem to be produced when the normal maturation process is impaired; their physiological relevance is unsure.

It is found in the mitochondrion. It localises to the cytoplasm. Its subcellular location is the cytosol. The enzyme catalyses 4 Fe(2+) + O2 + 4 H(+) = 4 Fe(3+) + 2 H2O. Functions as an activator of persulfide transfer to the scaffoding protein ISCU as component of the core iron-sulfur cluster (ISC) assembly complex and participates to the [2Fe-2S] cluster assembly. Accelerates sulfur transfer from NFS1 persulfide intermediate to ISCU and to small thiols such as L-cysteine and glutathione leading to persulfuration of these thiols and ultimately sulfide release. Binds ferrous ion and is released from FXN upon the addition of both L-cysteine and reduced FDX2 during [2Fe-2S] cluster assembly. The core iron-sulfur cluster (ISC) assembly complex is involved in the de novo synthesis of a [2Fe-2S] cluster, the first step of the mitochondrial iron-sulfur protein biogenesis. This process is initiated by the cysteine desulfurase complex (NFS1:LYRM4:NDUFAB1) that produces persulfide which is delivered on the scaffold protein ISCU in a FXN-dependent manner. Then this complex is stabilized by FDX2 which provides reducing equivalents to accomplish the [2Fe-2S] cluster assembly. Finally, the [2Fe-2S] cluster is transferred from ISCU to chaperone proteins, including HSCB, HSPA9 and GLRX5. May play a role in the protection against iron-catalyzed oxidative stress through its ability to catalyze the oxidation of Fe(2+) to Fe(3+); the oligomeric form but not the monomeric form has in vitro ferroxidase activity. May be able to store large amounts of iron in the form of a ferrihydrite mineral by oligomerization; however, the physiological relevance is unsure as reports are conflicting and the function has only been shown using heterologous overexpression systems. May function as an iron chaperone protein that protects the aconitase [4Fe-4S]2+ cluster from disassembly and promotes enzyme reactivation. May play a role as a high affinity iron binding partner for FECH that is capable of both delivering iron to ferrochelatase and mediating the terminal step in mitochondrial heme biosynthesis. In terms of biological role, modulates the RNA-binding activity of ACO1. May be involved in the cytoplasmic iron-sulfur protein biogenesis. May contribute to oxidative stress resistance and overall cell survival. In Bos taurus (Bovine), this protein is Frataxin, mitochondrial.